The chain runs to 619 residues: MPEYRSKTSTHGRNMAGARALWRATGVMETDFGKPIIAVANSFTQFVPGHVHLHNMGQLVAREIEKAGAIAKEFNTIAIDDGIAMGHSGMLYSLPSRDLIADSIEYMVNAHCADALVCISNCDKITPGMLIAAMRLNIPTIFVSGGPMEAGKVIGVANIQPERRLDLIDAMIESADDNISNRQVEEVEQNACPTCGSCSGMFTANSMNCLTEALGLSLPGNGSYLATHVGRKELFLEAGRMIVEITKRYYEQNDETVLPRSIATKKAFENAMTMDIAMGGSTNTILHLLAVANEAGVDFKMADIDRLSRVVPCICKTAPNNHDYYMEDVHRAGGIFAILKELDKAGKLHTDVHTIHAPTLKDAIEKWDVTNPENTHAIERFKAAPGGVRTTQAFSQNRMWKTLDLDREKGCIRDVAHAYSQDGGLAVLFGNIAERGCVVKTAGVDESILKFTGRARVFESQEDAVEGILGNQIVAGDIVIIRYEGPKGGPGMQEMLYPTSYLKSKGLGKACALLTDGRFSGGTSGLSIGHASPEAAEGGAIGLVHEGDTVEIDIPNRSIRLVISDEELAARRAEMEARGSKAWKPENRDRYVSAALRAYGAMATSADKGAVRDVAQIER.

Asp81 lines the Mg(2+) pocket. Cys122 is a binding site for [2Fe-2S] cluster. Mg(2+)-binding residues include Asp123 and Lys124. Residue Lys124 is modified to N6-carboxylysine. [2Fe-2S] cluster is bound at residue Cys198. Glu494 contacts Mg(2+). Ser520 functions as the Proton acceptor in the catalytic mechanism.

The protein belongs to the IlvD/Edd family. As to quaternary structure, homodimer. [2Fe-2S] cluster is required as a cofactor. The cofactor is Mg(2+).

It catalyses the reaction (2R)-2,3-dihydroxy-3-methylbutanoate = 3-methyl-2-oxobutanoate + H2O. It carries out the reaction (2R,3R)-2,3-dihydroxy-3-methylpentanoate = (S)-3-methyl-2-oxopentanoate + H2O. It functions in the pathway amino-acid biosynthesis; L-isoleucine biosynthesis; L-isoleucine from 2-oxobutanoate: step 3/4. The protein operates within amino-acid biosynthesis; L-valine biosynthesis; L-valine from pyruvate: step 3/4. Its function is as follows. Functions in the biosynthesis of branched-chain amino acids. Catalyzes the dehydration of (2R,3R)-2,3-dihydroxy-3-methylpentanoate (2,3-dihydroxy-3-methylvalerate) into 2-oxo-3-methylpentanoate (2-oxo-3-methylvalerate) and of (2R)-2,3-dihydroxy-3-methylbutanoate (2,3-dihydroxyisovalerate) into 2-oxo-3-methylbutanoate (2-oxoisovalerate), the penultimate precursor to L-isoleucine and L-valine, respectively. This is Dihydroxy-acid dehydratase from Neisseria meningitidis serogroup A / serotype 4A (strain DSM 15465 / Z2491).